Reading from the N-terminus, the 122-residue chain is uncharacterized protein (122 aa).

Transmembrane regions (helical) follow at residues 43-63 and 76-96; these read PIIITLFIFSFVISRMIIFFI and AVADAIINSIALVCIIVILYF.

The protein resides in the membrane. This is an uncharacterized protein from Schizosaccharomyces pombe (strain 972 / ATCC 24843) (Fission yeast).